The primary structure comprises 91 residues: Acylphosphatase (91 aa).

Residues 3–91 enclose the Acylphosphatase-like domain; that stretch reads CLKAVVKGKV…GNYGDFHIKY (89 aa). Active-site residues include R18 and N36.

The protein belongs to the acylphosphatase family.

The catalysed reaction is an acyl phosphate + H2O = a carboxylate + phosphate + H(+). The sequence is that of Acylphosphatase (acyP) from Dehalococcoides mccartyi (strain ATCC BAA-2266 / KCTC 15142 / 195) (Dehalococcoides ethenogenes (strain 195)).